We begin with the raw amino-acid sequence, 122 residues long: uncharacterized protein (122 aa).

This is an uncharacterized protein from Carica papaya (Papaya).